The following is a 241-amino-acid chain: MNILYSILINLALFLLGYLLLGSFNTSIILSRRVKNDDIREHNSKNAGATNSLRTYGAKFALIVFATDVLKTLLPILIISAIVNHVPAVNAFSYASYISPQALGLGVVIGHIFPAYYKFKGGKGAACTVGLIISINIILFLIAFLIFLLVVGISKIVSLGSITVAFSLLLFVWMPWMIQGPTGYWTNAVEYTNSFTTLVNYWYVSPIIYTLCAFLVLVSHRDNFKRLINKSERKFAIKKAV.

The next 6 helical transmembrane spans lie at 3 to 23 (ILYS…LLGS), 63 to 83 (IVFA…SAIV), 97 to 117 (YISP…PAYY), 131 to 151 (LIIS…LLVV), 156 to 176 (IVSL…WMPW), and 198 to 218 (LVNY…LVLV).

The protein belongs to the PlsY family. As to quaternary structure, probably interacts with PlsX.

Its subcellular location is the cell membrane. It carries out the reaction an acyl phosphate + sn-glycerol 3-phosphate = a 1-acyl-sn-glycero-3-phosphate + phosphate. The protein operates within lipid metabolism; phospholipid metabolism. In terms of biological role, catalyzes the transfer of an acyl group from acyl-phosphate (acyl-PO(4)) to glycerol-3-phosphate (G3P) to form lysophosphatidic acid (LPA). This enzyme utilizes acyl-phosphate as fatty acyl donor, but not acyl-CoA or acyl-ACP. In Mycoplasmopsis agalactiae (strain NCTC 10123 / CIP 59.7 / PG2) (Mycoplasma agalactiae), this protein is Glycerol-3-phosphate acyltransferase.